Here is a 140-residue protein sequence, read N- to C-terminus: Cystatin-like 1 (140 aa).

Residues 1 to 23 form the signal peptide; that stretch reads MEMKARGLRIPLLLLLVTVVVMA. A Cystatin domain is found at 32–126; the sequence is GGFKEKAMSK…CKSLIYSVPW (95 aa). N-linked (GlcNAc...) asparagine glycosylation is present at Asn-45. Intrachain disulfides connect Cys-94–Cys-104 and Cys-117–Cys-137.

Belongs to the cystatin family. In terms of tissue distribution, highly expressed in testis where it localizes to spermatogonium, spermatocyes and round spermatids. Not detected in spermatozoa. Also detected in epididymis, cerebrum and pituitary.

The protein localises to the secreted. This chain is Cystatin-like 1, found in Mus musculus (Mouse).